A 258-amino-acid polypeptide reads, in one-letter code: MGSRRYDSRTTIFSPEGRLYQVEYALESISHAGTAIGIMASDGIVLAAERKVTSTLLEQDTSTEKLYKLNDKIAVAVAGLTADAEILINTARIHAQNYLKTYNEDIPVEILVRRLSDIKQGYTQHGGLRPFGVSFIYAGYDDRYGYQLYTSNPSGNYTGWKAISVGANTSAAQTLLQMDYKDDMKVDDAIELALKTLSKTTDSSALTYDRLEFATIRKGANDGEVYQKIFKPQEIKDILVKTGITKKDEDEEADEDMK.

Glycyl lysine isopeptide (Lys-Gly) (interchain with G-Cter in ubiquitin) cross-links involve residues Lys-100, Lys-199, and Lys-231.

The protein belongs to the peptidase T1A family. In terms of assembly, the 26S proteasome consists of a 20S proteasome core and two 19S regulatory subunits. The 20S proteasome core is composed of 28 subunits that are arranged in four stacked rings, resulting in a barrel-shaped structure. The two end rings are each formed by seven alpha subunits, and the two central rings are each formed by seven beta subunits. The catalytic chamber with the active sites is on the inside of the barrel.

Its subcellular location is the cytoplasm. It is found in the nucleus. The proteasome degrades poly-ubiquitinated proteins in the cytoplasm and in the nucleus. It is essential for the regulated turnover of proteins and for the removal of misfolded proteins. The proteasome is a multicatalytic proteinase complex that is characterized by its ability to cleave peptides with Arg, Phe, Tyr, Leu, and Glu adjacent to the leaving group at neutral or slightly basic pH. It has an ATP-dependent proteolytic activity. The protein is Proteasome subunit alpha type-3 (PRE9) of Saccharomyces cerevisiae (strain ATCC 204508 / S288c) (Baker's yeast).